A 300-amino-acid polypeptide reads, in one-letter code: Putative zinc finger protein 705EP (300 aa).

Residues 7–78 (VTFEDVAIDF…GREFLQDQNP (72 aa)) form the KRAB domain. The C2H2-type 1; degenerate zinc-finger motif lies at 172-194 (YQCNLCEKAYTNCFHLRRPKMTH). 2 C2H2-type zinc fingers span residues 200-222 (YTCH…EKTH) and 228-250 (YKCH…ERTH). Residues 256-278 (YECDNSGKAFSQSSGFRGNKIIH) form a C2H2-type 4; degenerate zinc finger.

Belongs to the krueppel C2H2-type zinc-finger protein family.

It localises to the nucleus. Its function is as follows. May be involved in transcriptional regulation. This Homo sapiens (Human) protein is Putative zinc finger protein 705EP.